The chain runs to 51 residues: Large ribosomal subunit protein bL33 (51 aa).

Belongs to the bacterial ribosomal protein bL33 family.

This is Large ribosomal subunit protein bL33 from Alkalilimnicola ehrlichii (strain ATCC BAA-1101 / DSM 17681 / MLHE-1).